Consider the following 451-residue polypeptide: Phosphoglucosamine mutase (451 aa).

Residue Ser-102 is the Phosphoserine intermediate of the active site. 4 residues coordinate Mg(2+): Ser-102, Asp-242, Asp-244, and Asp-246. Ser-102 bears the Phosphoserine mark.

This sequence belongs to the phosphohexose mutase family. Mg(2+) serves as cofactor. Post-translationally, activated by phosphorylation.

It catalyses the reaction alpha-D-glucosamine 1-phosphate = D-glucosamine 6-phosphate. In terms of biological role, catalyzes the conversion of glucosamine-6-phosphate to glucosamine-1-phosphate. In Staphylococcus carnosus (strain TM300), this protein is Phosphoglucosamine mutase.